A 64-amino-acid chain; its full sequence is Large ribosomal subunit protein bL35 (64 aa).

This sequence belongs to the bacterial ribosomal protein bL35 family.

The polypeptide is Large ribosomal subunit protein bL35 (Chloroherpeton thalassium (strain ATCC 35110 / GB-78)).